Here is a 341-residue protein sequence, read N- to C-terminus: S-adenosylmethionine:tRNA ribosyltransferase-isomerase (341 aa).

It belongs to the QueA family. In terms of assembly, monomer.

It localises to the cytoplasm. It catalyses the reaction 7-aminomethyl-7-carbaguanosine(34) in tRNA + S-adenosyl-L-methionine = epoxyqueuosine(34) in tRNA + adenine + L-methionine + 2 H(+). It functions in the pathway tRNA modification; tRNA-queuosine biosynthesis. Its function is as follows. Transfers and isomerizes the ribose moiety from AdoMet to the 7-aminomethyl group of 7-deazaguanine (preQ1-tRNA) to give epoxyqueuosine (oQ-tRNA). The chain is S-adenosylmethionine:tRNA ribosyltransferase-isomerase from Clostridium botulinum (strain Okra / Type B1).